We begin with the raw amino-acid sequence, 151 residues long: F-box protein GID2 (151 aa).

Residues 1 to 25 (MKRSTTDSDLAGDAHNETNKKMKST) show a composition bias toward basic and acidic residues. Residues 1–27 (MKRSTTDSDLAGDAHNETNKKMKSTEE) are disordered. The 47-residue stretch at 29-75 (EIGFSNLDENLVYEVLKHVDAKTLAMSSCVSKIWHKTAQDERLWELI) folds into the F-box domain.

As to quaternary structure, part of some SCF(GID2) complex, which consist of SKP1B, CUL1 cullin, GID2/SLY1 and some RING box protein. Interacts directly with SKP1A and SKP1B. Interacts directly with DELLA proteins GAI, RGA, RGL1, RGL3 and probably RGL2. May have a higher affinity for phosphorylated DELLA proteins. In terms of tissue distribution, expressed in all tissues tested, including rosette leaves, green siliques, flowers, stems, cauline leaves and seedlings.

The protein resides in the nucleus. It participates in protein modification; protein ubiquitination. Functionally, essential component of the SCF-type E3 ligase complex, SCF(GID2), a complex that positively regulates the gibberellin signaling pathway. Upon gibberellin treatment, the SCF(GID2) complex mediates the ubiquitination and subsequent degradation of DELLA proteins (GAI, RGA and RGL2), some repressors of the gibberellin pathway, leading to activate the pathway. The sequence is that of F-box protein GID2 (GID2) from Arabidopsis thaliana (Mouse-ear cress).